A 741-amino-acid chain; its full sequence is Subtilisin-like protease SBT4.4 (741 aa).

Positions 1-24 (MAKGTTFIFLFSSLLVLSLSSVSA) are cleaved as a signal peptide. The propeptide at 25–112 (DKDDHGDQQV…VFPSRKLKLQ (88 aa)) is activation peptide. One can recognise an Inhibitor I9 domain in the interval 34–111 (VYIVYLGSLP…SVFPSRKLKL (78 aa)). Residues 116–589 (SWNFMGLKEG…SGHVDPIDAI (474 aa)) enclose the Peptidase S8 domain. Asp144 functions as the Charge relay system in the catalytic mechanism. Residues Asn175 and Asn195 are each glycosylated (N-linked (GlcNAc...) asparagine). The Charge relay system role is filled by His204. N-linked (GlcNAc...) asparagine glycosylation is found at Asn227 and Asn357. In terms of domain architecture, PA spans 359-445 (TNYPLVYGKS…LSNDDYKSLV (87 aa)). Asn449 is a glycosylation site (N-linked (GlcNAc...) asparagine). Residue Ser528 is the Charge relay system of the active site. N-linked (GlcNAc...) asparagine glycans are attached at residues Asn565, Asn610, Asn623, and Asn654.

The protein belongs to the peptidase S8 family. In terms of processing, the C-terminal propeptide is autocleaved.

The protein localises to the secreted. In Arabidopsis thaliana (Mouse-ear cress), this protein is Subtilisin-like protease SBT4.4.